An 80-amino-acid chain; its full sequence is Large ribosomal subunit protein bL31B (80 aa).

This sequence belongs to the bacterial ribosomal protein bL31 family. Type B subfamily. In terms of assembly, part of the 50S ribosomal subunit.

The polypeptide is Large ribosomal subunit protein bL31B (Stenotrophomonas maltophilia (strain K279a)).